The sequence spans 195 residues: Nucleoid occlusion factor SlmA (195 aa).

The region spanning 6–66 is the HTH tetR-type domain; sequence PSRRESILQA…ALIEFAEEAV (61 aa). The segment at residues 29–48 is a DNA-binding region (H-T-H motif); that stretch reads TTAGLAKTVGVTEAALYRHF. The stretch at 118 to 138 forms a coiled coil; it reads RKRASQFFERLETQIRQALKE.

This sequence belongs to the nucleoid occlusion factor SlmA family. As to quaternary structure, homodimer. Interacts with FtsZ.

Its subcellular location is the cytoplasm. It localises to the nucleoid. Functionally, required for nucleoid occlusion (NO) phenomenon, which prevents Z-ring formation and cell division over the nucleoid. Acts as a DNA-associated cell division inhibitor that binds simultaneously chromosomal DNA and FtsZ, and disrupts the assembly of FtsZ polymers. SlmA-DNA-binding sequences (SBS) are dispersed on non-Ter regions of the chromosome, preventing FtsZ polymerization at these regions. The polypeptide is Nucleoid occlusion factor SlmA (Marinobacter nauticus (strain ATCC 700491 / DSM 11845 / VT8) (Marinobacter aquaeolei)).